A 717-amino-acid chain; its full sequence is MSGDAAAEQAAEYVPEKVKKAEKKLEENPYDLDAWSILIREAQNQPIDKARKTYERLVAQFPSSGRFWKLYIEAEIKAKNYDKVEKLFQRCLMKVLHIDLWKCYLSYVRETKGKLPSYKEKMAQAYDFALDKIGMEIMSYQIWVDYINFLKGVEAVGSYAENQRITAVRRVYQRGCVNPMINIEQLWRDYNKYEEGINIHLAKKMIEDRSRDYMNARRVAKEYETVMKGLDRNAPSVPPQNTPQEAQQVDMWKKYIQWEKSNPLRTEDQTLITKRVMFAYEQCLLVLGHHPDIWYEAAQYLEQSSKLLAEKGDMNNAKLFSDEAANIYERAISTLLKKNMLLYFAYADYEESRMKYEKVHSIYNRLLAIEDIDPTLVYIQYMKFARRAEGIKSGRMIFKKAREDARTRHHVYVTAALMEYYCSKDKSVAFKIFELGLKKYGDIPEYVLAYIDYLSHLNEDNNTRVLFERVLTSGSLPPEKSGEIWARFLAFESNIGDLASILKVEKRRFTAFREEYEGKETALLVDRYKFMDLYPCSASELKALGYKDVSRAKLAAIIPDPVVAPSIVPVLKDEVDRKPEYPKPDTQQMIPFQPRHLAPPGLHPVPGGVFPVPPAAVVLMKLLPPPICFQGPFVQVDELMEIFRRCKIPNTVEEAVRIITGGAPELAVEGNGPVESSAVLTKAVKRPNEDSDEDEEKGAVVPPVHDIYRARQQKRIR.

Position 2 is an N-acetylserine (S2). HAT repeat units lie at residues Q45 to K77, K79 to E110, S117 to G152, Q163 to G196, K221 to S261, L271 to Q303, L319 to S352, M354 to R387, and N458 to N494. The disordered stretch occupies residues A683–V704. Residue S691 is modified to Phosphoserine.

As to quaternary structure, homodimer. The CSTF complex is composed of CSTF1 (50 kDa subunit), CSTF2 (64 kDa subunit) and CSTF3 (77 kDa subunit). CSTF3 directly interacts with CSTF1 and CSTF2. Interacts with FIP1L1.

It localises to the nucleus. One of the multiple factors required for polyadenylation and 3'-end cleavage of mammalian pre-mRNAs. This chain is Cleavage stimulation factor subunit 3 (Cstf3), found in Mus musculus (Mouse).